The primary structure comprises 275 residues: Nitrogenase iron protein 1 (275 aa).

9-16 contacts ATP; it reads GKGGIGKS. Cysteine 97 is a [4Fe-4S] cluster binding site. The residue at position 100 (arginine 100) is an ADP-ribosylarginine; by dinitrogenase reductase ADP-ribosyltransferase. Residue cysteine 132 participates in [4Fe-4S] cluster binding.

This sequence belongs to the NifH/BchL/ChlL family. Homodimer. [4Fe-4S] cluster is required as a cofactor. In terms of processing, the reversible ADP-ribosylation of Arg-100 inactivates the nitrogenase reductase and regulates nitrogenase activity.

The enzyme catalyses N2 + 8 reduced [2Fe-2S]-[ferredoxin] + 16 ATP + 16 H2O = H2 + 8 oxidized [2Fe-2S]-[ferredoxin] + 2 NH4(+) + 16 ADP + 16 phosphate + 6 H(+). The key enzymatic reactions in nitrogen fixation are catalyzed by the nitrogenase complex, which has 2 components: the iron protein and the molybdenum-iron protein. This is Nitrogenase iron protein 1 (nifH1) from Methanothermobacter thermautotrophicus (strain ATCC 29096 / DSM 1053 / JCM 10044 / NBRC 100330 / Delta H) (Methanobacterium thermoautotrophicum).